Consider the following 300-residue polypeptide: Acetylglutamate kinase (300 aa).

Substrate contacts are provided by residues Gly73–Gly74, Arg95, and Asn197.

Belongs to the acetylglutamate kinase family. ArgB subfamily.

It is found in the cytoplasm. The catalysed reaction is N-acetyl-L-glutamate + ATP = N-acetyl-L-glutamyl 5-phosphate + ADP. The protein operates within amino-acid biosynthesis; L-arginine biosynthesis; N(2)-acetyl-L-ornithine from L-glutamate: step 2/4. Functionally, catalyzes the ATP-dependent phosphorylation of N-acetyl-L-glutamate. The chain is Acetylglutamate kinase from Bordetella pertussis (strain Tohama I / ATCC BAA-589 / NCTC 13251).